The primary structure comprises 250 residues: Geranylgeranylglyceryl phosphate synthase (250 aa).

2 residues coordinate Mg(2+): D26 and S55. Sn-glycerol 1-phosphate contacts are provided by residues Y174 to G180, G205 to G206, and G227 to T228.

It belongs to the GGGP/HepGP synthase family. Group II subfamily. The cofactor is Mg(2+).

The protein localises to the cytoplasm. It carries out the reaction sn-glycerol 1-phosphate + (2E,6E,10E)-geranylgeranyl diphosphate = sn-3-O-(geranylgeranyl)glycerol 1-phosphate + diphosphate. It functions in the pathway membrane lipid metabolism; glycerophospholipid metabolism. In terms of biological role, prenyltransferase that catalyzes the transfer of the geranylgeranyl moiety of geranylgeranyl diphosphate (GGPP) to the C3 hydroxyl of sn-glycerol-1-phosphate (G1P). This reaction is the first ether-bond-formation step in the biosynthesis of archaeal membrane lipids. The chain is Geranylgeranylglyceryl phosphate synthase from Nitrosopumilus maritimus (strain SCM1).